The following is a 65-amino-acid chain: Large ribosomal subunit protein bL35c (65 aa).

The protein belongs to the bacterial ribosomal protein bL35 family.

The protein resides in the plastid. It is found in the cyanelle. The polypeptide is Large ribosomal subunit protein bL35c (rpl35) (Cyanophora paradoxa).